The primary structure comprises 571 residues: Putative fatty-acid--CoA ligase fadD11 (571 aa).

Residues 1 to 19 show a composition bias toward low complexity; sequence MARLRGAGAAGRCRPGRFG. Disordered regions lie at residues 1–35 and 67–91; these read MARL…EPDR and RQRG…RCAH. Basic residues predominate over residues 78–91; it reads ATVRRSRSRQRCAH. The next 2 membrane-spanning stretches (helical) occupy residues 314-334 and 431-451; these read TLAF…MSEL and ANIE…MAIG.

The protein belongs to the ATP-dependent AMP-binding enzyme family.

It is found in the cell membrane. This chain is Putative fatty-acid--CoA ligase fadD11 (fadD11), found in Mycobacterium tuberculosis (strain CDC 1551 / Oshkosh).